A 203-amino-acid chain; its full sequence is Endo-type membrane-bound lytic murein transglycosylase A (203 aa).

The N-terminal stretch at 1-15 (MKLRWFAFLIVLLAG) is a signal peptide. Cysteine 16 carries the N-palmitoyl cysteine lipid modification. Cysteine 16 is lipidated: S-diacylglycerol cysteine.

This sequence belongs to the transglycosylase Slt family.

The protein localises to the cell outer membrane. The catalysed reaction is Endolytic cleavage of the (1-&gt;4)-beta-glycosidic linkage between N-acetylmuramic acid (MurNAc) and N-acetylglucosamine (GlcNAc) residues in peptidoglycan with concomitant formation of a 1,6-anhydrobond in the MurNAc residue.. Functionally, murein-degrading enzyme. May play a role in recycling of muropeptides during cell elongation and/or cell division. Preferentially cleaves at a distance of more than two disaccharide units from the ends of the glycan chain. The sequence is that of Endo-type membrane-bound lytic murein transglycosylase A from Escherichia coli O127:H6 (strain E2348/69 / EPEC).